Consider the following 144-residue polypeptide: D-aminoacyl-tRNA deacylase (144 aa).

Residues 136–137 (GP) carry the Gly-cisPro motif, important for rejection of L-amino acids motif.

The protein belongs to the DTD family. As to quaternary structure, homodimer.

It is found in the cytoplasm. The enzyme catalyses glycyl-tRNA(Ala) + H2O = tRNA(Ala) + glycine + H(+). It catalyses the reaction a D-aminoacyl-tRNA + H2O = a tRNA + a D-alpha-amino acid + H(+). In terms of biological role, an aminoacyl-tRNA editing enzyme that deacylates mischarged D-aminoacyl-tRNAs. Also deacylates mischarged glycyl-tRNA(Ala), protecting cells against glycine mischarging by AlaRS. Acts via tRNA-based rather than protein-based catalysis; rejects L-amino acids rather than detecting D-amino acids in the active site. By recycling D-aminoacyl-tRNA to D-amino acids and free tRNA molecules, this enzyme counteracts the toxicity associated with the formation of D-aminoacyl-tRNA entities in vivo and helps enforce protein L-homochirality. This chain is D-aminoacyl-tRNA deacylase, found in Actinobacillus pleuropneumoniae serotype 5b (strain L20).